A 1124-amino-acid polypeptide reads, in one-letter code: ATP-dependent DNA helicase mph1 (1124 aa).

Disordered regions lie at residues Met-1–Ser-103 and Gln-123–His-302. Composition is skewed to acidic residues over residues Asp-7–Gly-17 and Arg-169–Glu-178. Positions Thr-210–Ala-222 are enriched in polar residues. Residues Leu-226–Asp-236 are compositionally biased toward acidic residues. The segment covering Ser-255 to Leu-271 has biased composition (polar residues). One can recognise a Helicase ATP-binding domain in the interval Ile-328–Arg-496. Leu-341 to Thr-348 serves as a coordination point for ATP. The DEAH box signature appears at Asp-444–His-447. In terms of domain architecture, Helicase C-terminal spans Tyr-666 to Met-840. Residues Lys-855–Lys-873 show a composition bias toward basic and acidic residues. Disordered stretches follow at residues Lys-855 to Pro-923 and Met-1016 to Asp-1124. Basic residues-rich tracts occupy residues Arg-874–Phe-886 and Ser-906–Ala-916.

The protein belongs to the DEAD box helicase family. DEAH subfamily. FANCM sub-subfamily. Interacts with the MHF histone-fold complex to form the FANCM-MHF complex.

It is found in the nucleus. The catalysed reaction is ATP + H2O = ADP + phosphate + H(+). ATP-dependent DNA helicase involved in DNA damage repair by homologous recombination and in genome maintenance. Capable of unwinding D-loops. Plays a role in limiting crossover recombinants during mitotic DNA double-strand break (DSB) repair. Component of a FANCM-MHF complex which promotes gene conversion at blocked replication forks, probably by reversal of the stalled fork. This Aspergillus niger (strain ATCC MYA-4892 / CBS 513.88 / FGSC A1513) protein is ATP-dependent DNA helicase mph1.